Reading from the N-terminus, the 741-residue chain is Polyribonucleotide nucleotidyltransferase (741 aa).

Mg(2+) is bound by residues Asp489 and Asp495. In terms of domain architecture, KH spans 556–615 (PKIDSIQIPVDKIKVVIGKGGETIDKIIAETGVTIDIDEEGLVQIFSSDQDAIDRAKTII). The 69-residue stretch at 625–693 (GEVYTVPVVR…EKGRVDASIK (69 aa)) folds into the S1 motif domain. The tract at residues 695-741 (LLPKPEKNEDGENGEEHRHCCCSHHKPDHHNESVEAPKKSDESETKE) is disordered. Composition is skewed to basic and acidic residues over residues 698-713 (KPEK…EHRH) and 723-741 (HHNE…ETKE).

The protein belongs to the polyribonucleotide nucleotidyltransferase family. The cofactor is Mg(2+).

Its subcellular location is the cytoplasm. It carries out the reaction RNA(n+1) + phosphate = RNA(n) + a ribonucleoside 5'-diphosphate. Its function is as follows. Involved in mRNA degradation. Catalyzes the phosphorolysis of single-stranded polyribonucleotides processively in the 3'- to 5'-direction. The protein is Polyribonucleotide nucleotidyltransferase of Streptococcus thermophilus (strain CNRZ 1066).